The sequence spans 182 residues: UPF0397 protein llmg_0343 (182 aa).

The next 5 membrane-spanning stretches (helical) occupy residues 8 to 28 (IVVA…LINI), 42 to 62 (AVLA…IGFI), 74 to 94 (APWW…GFGV), 114 to 134 (IVQF…GDIL), and 146 to 166 (QGVV…TLLL).

The protein belongs to the UPF0397 family.

The protein resides in the cell membrane. The chain is UPF0397 protein llmg_0343 from Lactococcus lactis subsp. cremoris (strain MG1363).